A 363-amino-acid polypeptide reads, in one-letter code: Cytochrome b (363 aa).

The next 4 membrane-spanning stretches (helical) occupy residues 24 to 44 (VGFS…CLAW), 68 to 90 (FVIR…IHIF), 105 to 125 (VWFI…IGYV), and 171 to 191 (LHVL…LHLF). 2 residues coordinate heme b: H74 and H88. Residues H175 and H189 each contribute to the heme b site. H194 is an a ubiquinone binding site. A run of 4 helical transmembrane segments spans residues 219-239 (FYLR…YVIF), 287-307 (FLMV…ILWF), 321-341 (LILF…VLAY), and 342-362 (PIWM…VCRL).

The protein belongs to the cytochrome b family. The main subunits of complex b-c1 are: cytochrome b, cytochrome c1 and the Rieske protein. It depends on heme b as a cofactor.

Its subcellular location is the mitochondrion inner membrane. In terms of biological role, component of the ubiquinol-cytochrome c reductase complex (complex III or cytochrome b-c1 complex) that is part of the mitochondrial respiratory chain. The b-c1 complex mediates electron transfer from ubiquinol to cytochrome c. Contributes to the generation of a proton gradient across the mitochondrial membrane that is then used for ATP synthesis. The chain is Cytochrome b (MT-CYB) from Trypanosoma brucei brucei.